Reading from the N-terminus, the 817-residue chain is U3 small nucleolar RNA-associated protein 13 (817 aa).

WD repeat units lie at residues 59–100, 102–139, 142–187, 191–233, 238–280, 386–425, 432–476, 489–528, 531–572, 573–614, 616–654, and 664–705; these read EDEQ…RSMK, SSPS…ITHS, GHGG…HTLQ, SAVR…KCKL, PVNQ…VLKR, GHED…CKFD, GHSA…ASMD, AHEK…LEAT, NHKR…KTLE, GHTN…KTLD, HNNR…EIEE, and EQEQ…LGES.

Interacts with snoRNA U3. Interacts with MPP10. Component of the ribosomal small subunit (SSU) processome composed of at least 40 protein subunits and snoRNA U3.

It is found in the nucleus. The protein localises to the nucleolus. Involved in nucleolar processing of pre-18S ribosomal RNA. This is U3 small nucleolar RNA-associated protein 13 (UTP13) from Saccharomyces cerevisiae (strain ATCC 204508 / S288c) (Baker's yeast).